The following is a 544-amino-acid chain: CTP synthase (544 aa).

The segment at 1-265 (MTKFIFVTGG…DDIICEHLDL (265 aa)) is amidoligase domain. S13 is a binding site for CTP. Residue S13 participates in UTP binding. Residues 14–19 (SLGKGI) and D71 each bind ATP. Residues D71 and E139 each contribute to the Mg(2+) site. CTP-binding positions include 146–148 (DIE), 186–191 (KTKPTQ), and K222. UTP-binding positions include 186–191 (KTKPTQ) and K222. One can recognise a Glutamine amidotransferase type-1 domain in the interval 290–542 (NIAMVGKYVD…VEAALAYQAD (253 aa)). G351 lines the L-glutamine pocket. Residue C378 is the Nucleophile; for glutamine hydrolysis of the active site. L-glutamine-binding positions include 379–382 (LGMQ), E402, and R469. Residues H515 and E517 contribute to the active site.

It belongs to the CTP synthase family. As to quaternary structure, homotetramer.

The catalysed reaction is UTP + L-glutamine + ATP + H2O = CTP + L-glutamate + ADP + phosphate + 2 H(+). It catalyses the reaction L-glutamine + H2O = L-glutamate + NH4(+). The enzyme catalyses UTP + NH4(+) + ATP = CTP + ADP + phosphate + 2 H(+). Its pathway is pyrimidine metabolism; CTP biosynthesis via de novo pathway; CTP from UDP: step 2/2. With respect to regulation, allosterically activated by GTP, when glutamine is the substrate; GTP has no effect on the reaction when ammonia is the substrate. The allosteric effector GTP functions by stabilizing the protein conformation that binds the tetrahedral intermediate(s) formed during glutamine hydrolysis. Inhibited by the product CTP, via allosteric rather than competitive inhibition. In terms of biological role, catalyzes the ATP-dependent amination of UTP to CTP with either L-glutamine or ammonia as the source of nitrogen. Regulates intracellular CTP levels through interactions with the four ribonucleotide triphosphates. This is CTP synthase from Laribacter hongkongensis (strain HLHK9).